The following is a 220-amino-acid chain: Protein DGCR6 (220 aa).

Residues 76–142 adopt a coiled-coil conformation; the sequence is KSLYNQRLRL…EQRAMDQKIV (67 aa).

It belongs to the gonadal family. In terms of tissue distribution, found in all tissues examined with highest expression in liver, heart and skeletal muscle. Lower levels in pancreas and placenta. Weak expression in brain.

It localises to the nucleus. Functionally, may play a role in neural crest cell migration into the third and fourth pharyngeal pouches. This is Protein DGCR6 (DGCR6) from Homo sapiens (Human).